We begin with the raw amino-acid sequence, 717 residues long: Catalase-peroxidase (717 aa).

Positions 1 to 12 are cleaved as a signal peptide; the sequence is MTSKGMCPVAHG. Residues 93–221 constitute a cross-link (tryptophyl-tyrosyl-methioninium (Trp-Tyr) (with M-247)); that stretch reads WHSAGSYRIA…LAAVMMGLIY (129 aa). The active-site Proton acceptor is the His-94. A cross-link (tryptophyl-tyrosyl-methioninium (Tyr-Met) (with W-93)) is located at residues 221 to 247; that stretch reads YVNPEGVDGKPDPLKTAQDMRVTFARM. Position 262 (His-262) interacts with heme b.

This sequence belongs to the peroxidase family. Peroxidase/catalase subfamily. Homodimer or homotetramer. It depends on heme b as a cofactor. In terms of processing, formation of the three residue Trp-Tyr-Met cross-link is important for the catalase, but not the peroxidase activity of the enzyme.

It catalyses the reaction H2O2 + AH2 = A + 2 H2O. The enzyme catalyses 2 H2O2 = O2 + 2 H2O. Bifunctional enzyme with both catalase and broad-spectrum peroxidase activity. This is Catalase-peroxidase from Polynucleobacter asymbioticus (strain DSM 18221 / CIP 109841 / QLW-P1DMWA-1) (Polynucleobacter necessarius subsp. asymbioticus).